We begin with the raw amino-acid sequence, 97 residues long: Putative pterin-4-alpha-carbinolamine dehydratase (97 aa).

This sequence belongs to the pterin-4-alpha-carbinolamine dehydratase family.

It catalyses the reaction (4aS,6R)-4a-hydroxy-L-erythro-5,6,7,8-tetrahydrobiopterin = (6R)-L-erythro-6,7-dihydrobiopterin + H2O. This Cyanothece sp. (strain PCC 7425 / ATCC 29141) protein is Putative pterin-4-alpha-carbinolamine dehydratase.